We begin with the raw amino-acid sequence, 359 residues long: Putative B3 domain-containing protein At3g24850 (359 aa).

Disordered stretches follow at residues 92-111 and 159-192; these read DSEI…LQNS and EKME…KRTG. Over residues 100–111 the composition is skewed to polar residues; sequence TSDSQMKTLQNS. The segment at residues 250–351 is a DNA-binding region (TF-B3); it reads FNNLLQNDFL…VLCFAMEQSS (102 aa).

The protein resides in the nucleus. The protein is Putative B3 domain-containing protein At3g24850 of Arabidopsis thaliana (Mouse-ear cress).